A 791-amino-acid polypeptide reads, in one-letter code: Cullin-2 (791 aa).

One can recognise a Cullin neddylation domain in the interval 722–784 (DRKYYMECAI…KMYIQRTDQN (63 aa)). Residue Lys-736 forms a Glycyl lysine isopeptide (Lys-Gly) (interchain with G-Cter in NEDD8) linkage.

The protein belongs to the cullin family. As to quaternary structure, component of multiple CBC (Cul2-ElonginB-ElonginC) E3 ubiquitin-protein ligase complexes formed of cul-2, elb-1, elc-1, rbx-1 and a variable substrate recognition component. Component of the CBC(fem-1) E3 ubiquitin-protein ligase complex with fem-1, fem-2 and fem-3. The CBC(fem-1) complex interacts with tra-1 and promotes tra-1 degradation. Probable component of the CBC(lrr-1) E3 ubiquitin-protein ligase complex incuding cul-2, elb-1, elc-1, rbx-1 and lrr-1. The CBC(lrr-1) complex interacts with the DNA replisome complex at the end of S phase; the interaction promotes the release of components of the CMG helicase complex (a component of the replisome) from chromatin. Probable component of an CBC(zif-1) E3 ubiquitin-protein ligase including cul-2, elc-1, rbx-1 and zif-1. Part of an E3 ubiquitin-protein ligase complex including cul-2, elc-1 and zyg-11. Interacts with Skp1-related protein skr-10. In terms of processing, neddylated; which enhances the ubiquitination activity of CBC (Cul2-ElonginB-ElonginC) E3 ubiquitin-protein ligase complexes. In adults, highly expressed in meiotic cells and oocytes. In larvae, expressed in many proliferating cell types: P cells during the L1 stage; seam cells when they divide at every molt; vulval and somatic gonad cells in late L3 and L4 stages; and intestinal cells throughout larval development.

The protein localises to the cytoplasm. The protein resides in the nucleus. Its pathway is protein modification; protein ubiquitination. In terms of biological role, core component of multiple cullin-RING-based CBC (Cul2-ElonginB-ElonginC) E3 ubiquitin-protein ligase complexes which mediate the ubiquitination and subsequent proteasomal degradation of target proteins. As a scaffold protein may contribute to catalysis through positioning of the substrate and the ubiquitin-conjugating enzyme. The functional specificity of the CBC complex depends on the variable substrate recognition component. May function in ubiquitin-mediated degradation of CKIs to target cki-1 for degradation. CBC(zif-1) may ensure germline precursor cell asymmetry by targeting germline proteins for destruction if expressed in non-germline cells. As part of the CBC(fem-1) complex directs ubiquitination of tra-1. As part of the CBC(lrr-1) complex, required for the ubiquitination and dissasembly of the CMG helicase complex from chromatin at the end of DNA replication. Positive cell-cycle regulator that is required at two distinct points in the cell cycle; the G1-to-S-phase transition and mitosis. Also required for proper cytoskeletal movement and mitotic chromosome condensation. The polypeptide is Cullin-2 (Caenorhabditis elegans).